Reading from the N-terminus, the 194-residue chain is Pyridoxal 5'-phosphate synthase subunit PdxT (194 aa).

54-56 (GES) contributes to the L-glutamine binding site. The active-site Nucleophile is the Cys83. Residues Arg110 and 139–140 (IR) each bind L-glutamine. Active-site charge relay system residues include His175 and Glu177.

Belongs to the glutaminase PdxT/SNO family. As to quaternary structure, in the presence of PdxS, forms a dodecamer of heterodimers. Only shows activity in the heterodimer.

It catalyses the reaction aldehydo-D-ribose 5-phosphate + D-glyceraldehyde 3-phosphate + L-glutamine = pyridoxal 5'-phosphate + L-glutamate + phosphate + 3 H2O + H(+). The enzyme catalyses L-glutamine + H2O = L-glutamate + NH4(+). The protein operates within cofactor biosynthesis; pyridoxal 5'-phosphate biosynthesis. In terms of biological role, catalyzes the hydrolysis of glutamine to glutamate and ammonia as part of the biosynthesis of pyridoxal 5'-phosphate. The resulting ammonia molecule is channeled to the active site of PdxS. The polypeptide is Pyridoxal 5'-phosphate synthase subunit PdxT (Methanoregula boonei (strain DSM 21154 / JCM 14090 / 6A8)).